Consider the following 95-residue polypeptide: Defensin-like protein 232 (95 aa).

An N-terminal signal peptide occupies residues 1–26; it reads MRCTTLIMVSFVVSCLLLSLVEESEA. Cystine bridges form between Cys33–Cys94, Cys43–Cys68, Cys51–Cys84, and Cys66–Cys86.

Belongs to the DEFL family. As to expression, flower buds.

It localises to the secreted. The protein is Defensin-like protein 232 (SCRL23) of Arabidopsis thaliana (Mouse-ear cress).